A 411-amino-acid polypeptide reads, in one-letter code: Intracellular hyaluronan-binding protein 4 (411 aa).

2 positions are modified to phosphoserine: S7 and S36. Residues 42-62 (LREAEHRRQQQLQRKRRDEAA) adopt a coiled-coil conformation. The tract at residues 42-271 (LREAEHRRQQ…ECQGTLDEES (230 aa)) is disordered. Residue R70 is modified to Omega-N-methylarginine. S74 is subject to Phosphoserine. A compositionally biased stretch (basic and acidic residues) spans 87–97 (GRRESQKERKS). Phosphoserine is present on S108. Composition is skewed to basic and acidic residues over residues 138 to 181 (VLER…DRPL) and 205 to 229 (DSFD…RMED). Residues K212 and K274 each participate in a glycyl lysine isopeptide (Lys-Gly) (interchain with G-Cter in SUMO1); alternate cross-link. Residues K212 and K274 each participate in a glycyl lysine isopeptide (Lys-Gly) (interchain with G-Cter in SUMO2); alternate cross-link. Residues 279 to 301 (EVEEENQVQEMTLDEWKNLQEQT) are a coiled coil. Basic and acidic residues predominate over residues 296 to 313 (NLQEQTRPKPEFNIRKPE). The disordered stretch occupies residues 296 to 318 (NLQEQTRPKPEFNIRKPESTVPS). K334 participates in a covalent cross-link: Glycyl lysine isopeptide (Lys-Gly) (interchain with G-Cter in SUMO1); alternate. K334 participates in a covalent cross-link: Glycyl lysine isopeptide (Lys-Gly) (interchain with G-Cter in SUMO2); alternate. A phosphothreonine; by PKC mark is found at T352 and T373. Residues 358 to 411 (NFGNLPRPGRGARGSTRGGRGRMRRTENYGPRAEVVTQDVAPNPDDPEDFPALA) form a disordered region. Residues 402–411 (DDPEDFPALA) show a composition bias toward acidic residues.

It belongs to the SERBP1-HABP4 family. As to quaternary structure, associates with ribosomes; promoting ribosome stabilization. Interacts with EEF2/eEF2; promoting ribosome stabilization. Interacts with FMR1. Interacts with FXR1 and FXR2. Interacts with CHD3 (via C-terminus). Interacts (via C-terminus) with RACK1. Interacts with p53/TP53. Interacts (via N-terminus) with SRSF9; this interaction is direct. Interacts with SYNCRIP; this interaction is direct. Interacts with MEF2C (via N-terminus); this interaction decreases DNA-binding activity of MEF2C in myocardial cells in response to mechanical stress. Interacts with PRMT1 (via N-terminus). Interacts with SPIN1. Post-translationally, phosphorylated by phorbol 12-myristate 13-acetate (PMA)-activated PKC isoforms at Thr-352 and Thr-373. Methylated. Methylation is decreased by phorbol 12-myristate 13-acetate (PMA)-activated PKC, in vitro. In terms of tissue distribution, expressed in adult heart, brain, liver, kidney, testis, and in various embryonic tissues, but not in adult spleen, lung or skeletal muscle.

The protein resides in the nucleus. Its subcellular location is the cytoplasm. The protein localises to the stress granule. It localises to the sarcoplasm. It is found in the nuclear body. The protein resides in the nucleolus. Its subcellular location is the nucleus speckle. The protein localises to the cajal body. It localises to the gem. In terms of biological role, ribosome-binding protein that promotes ribosome hibernation, a process during which ribosomes are stabilized in an inactive state and preserved from proteasomal degradation. Acts via its association with EEF2/eEF2 factor at the A-site of the ribosome, promoting ribosome stabilization in an inactive state compatible with storage. Plays a key role in ribosome hibernation in the mature oocyte by promoting ribosome stabilization. Ribosomes, which are produced in large quantities during oogenesis, are stored and translationally repressed in the oocyte and early embryo. Also binds RNA, regulating transcription and pre-mRNA splicing. Binds (via C-terminus) to poly(U) RNA. Seems to play a role in PML-nuclear bodies formation. Negatively regulates DNA-binding activity of the transcription factor MEF2C in myocardial cells in response to mechanical stress. The chain is Intracellular hyaluronan-binding protein 4 from Mus musculus (Mouse).